Reading from the N-terminus, the 330-residue chain is GTPase Obg (330 aa).

Residues 1 to 159 form the Obg domain; sequence MNFIDEVKIY…MWIHLSLKLL (159 aa). The region spanning 160–327 is the OBG-type G domain; sequence SDVGLVGLPN…IVKLALKIIK (168 aa). GTP is bound by residues 166–173, 191–195, 212–215, 279–282, and 308–310; these read GLPNAGKS, FTTLV, DIPG, NKCD, and STY. Mg(2+) contacts are provided by Ser173 and Thr193.

It belongs to the TRAFAC class OBG-HflX-like GTPase superfamily. OBG GTPase family. In terms of assembly, monomer. Mg(2+) is required as a cofactor.

The protein resides in the cytoplasm. Functionally, an essential GTPase which binds GTP, GDP and possibly (p)ppGpp with moderate affinity, with high nucleotide exchange rates and a fairly low GTP hydrolysis rate. Plays a role in control of the cell cycle, stress response, ribosome biogenesis and in those bacteria that undergo differentiation, in morphogenesis control. The polypeptide is GTPase Obg (Rickettsia akari (strain Hartford)).